We begin with the raw amino-acid sequence, 49 residues long: Large ribosomal subunit protein eL40 (49 aa).

Belongs to the eukaryotic ribosomal protein eL40 family.

The protein is Large ribosomal subunit protein eL40 of Archaeoglobus fulgidus (strain ATCC 49558 / DSM 4304 / JCM 9628 / NBRC 100126 / VC-16).